Consider the following 140-residue polypeptide: Large ribosomal subunit protein uL11 (140 aa).

This sequence belongs to the universal ribosomal protein uL11 family. Part of the ribosomal stalk of the 50S ribosomal subunit. Interacts with L10 and the large rRNA to form the base of the stalk. L10 forms an elongated spine to which L12 dimers bind in a sequential fashion forming a multimeric L10(L12)X complex. In terms of processing, one or more lysine residues are methylated.

Functionally, forms part of the ribosomal stalk which helps the ribosome interact with GTP-bound translation factors. The chain is Large ribosomal subunit protein uL11 from Syntrophobacter fumaroxidans (strain DSM 10017 / MPOB).